The primary structure comprises 340 residues: Ketol-acid reductoisomerase (NADP(+)) (340 aa).

The region spanning 1–183 is the KARI N-terminal Rossmann domain; sequence MAITVYYDKD…GGGRTGIIET (183 aa). NADP(+) contacts are provided by residues 26–29, Arg49, Ser52, Ser54, and 84–87; these read FGSQ and DEIQ. The active site involves His109. Gly135 serves as a coordination point for NADP(+). A KARI C-terminal knotted domain is found at 184–329; it reads TFKAETETDL…RNLRAMMPWI (146 aa). 4 residues coordinate Mg(2+): Asp192, Glu196, Glu228, and Glu232. Ser253 is a substrate binding site.

It belongs to the ketol-acid reductoisomerase family. Requires Mg(2+) as cofactor.

The enzyme catalyses (2R)-2,3-dihydroxy-3-methylbutanoate + NADP(+) = (2S)-2-acetolactate + NADPH + H(+). The catalysed reaction is (2R,3R)-2,3-dihydroxy-3-methylpentanoate + NADP(+) = (S)-2-ethyl-2-hydroxy-3-oxobutanoate + NADPH + H(+). It participates in amino-acid biosynthesis; L-isoleucine biosynthesis; L-isoleucine from 2-oxobutanoate: step 2/4. The protein operates within amino-acid biosynthesis; L-valine biosynthesis; L-valine from pyruvate: step 2/4. Functionally, involved in the biosynthesis of branched-chain amino acids (BCAA). Catalyzes an alkyl-migration followed by a ketol-acid reduction of (S)-2-acetolactate (S2AL) to yield (R)-2,3-dihydroxy-isovalerate. In the isomerase reaction, S2AL is rearranged via a Mg-dependent methyl migration to produce 3-hydroxy-3-methyl-2-ketobutyrate (HMKB). In the reductase reaction, this 2-ketoacid undergoes a metal-dependent reduction by NADPH to yield (R)-2,3-dihydroxy-isovalerate. The sequence is that of Ketol-acid reductoisomerase (NADP(+)) from Campylobacter jejuni subsp. doylei (strain ATCC BAA-1458 / RM4099 / 269.97).